A 164-amino-acid polypeptide reads, in one-letter code: Large ribosomal subunit protein uL10 (164 aa).

This sequence belongs to the universal ribosomal protein uL10 family. Part of the ribosomal stalk of the 50S ribosomal subunit. The N-terminus interacts with L11 and the large rRNA to form the base of the stalk. The C-terminus forms an elongated spine to which L12 dimers bind in a sequential fashion forming a multimeric L10(L12)X complex.

Functionally, forms part of the ribosomal stalk, playing a central role in the interaction of the ribosome with GTP-bound translation factors. This is Large ribosomal subunit protein uL10 (rplJ) from Helicobacter pylori (strain ATCC 700392 / 26695) (Campylobacter pylori).